A 409-amino-acid polypeptide reads, in one-letter code: Sex-determination protein fem-3 (409 aa).

As to quaternary structure, component of a complex containing fem-1, fem-2 and fem-3. Interacts with fem-1 and fem-2 (via N-terminus). Part of a E3 ubiquitin-protein ligase complex, at least composed of cul-2, elc-1, tra-1, fem-1, fem-2 and fem-3; mediates the ubiquitination and subsequent proteasomal degradation of tra-1. Interacts with sel-10. Interacts with tra-2.

Its function is as follows. Required for male development. In XO (male) animals, fem-3 directs male differentiation in all tissues. In XX (hermaphrodite animals), it specifies the first 80 or so germ cells to be sperm. Negatively regulates male development when bound to tra-2. This chain is Sex-determination protein fem-3, found in Caenorhabditis briggsae.